The primary structure comprises 174 residues: Large ribosomal subunit protein uL10 (174 aa).

Belongs to the universal ribosomal protein uL10 family. Part of the ribosomal stalk of the 50S ribosomal subunit. The N-terminus interacts with L11 and the large rRNA to form the base of the stalk. The C-terminus forms an elongated spine to which L12 dimers bind in a sequential fashion forming a multimeric L10(L12)X complex.

Its function is as follows. Forms part of the ribosomal stalk, playing a central role in the interaction of the ribosome with GTP-bound translation factors. The polypeptide is Large ribosomal subunit protein uL10 (Bordetella bronchiseptica (strain ATCC BAA-588 / NCTC 13252 / RB50) (Alcaligenes bronchisepticus)).